The chain runs to 297 residues: CCAAT/enhancer-binding protein beta (297 aa).

The segment at 1 to 22 is required for Lys-134 sumoylation; the sequence is MHRLLAWDAACLPPPPAAFRPM. The residue at position 3 (R3) is an Asymmetric dimethylarginine; by CARM1. The tract at residues 22–105 is required for MYC transcriptional repression; it reads MEVANFYYEP…YGAKPSKKPS (84 aa). An N6-acetyllysine; alternate modification is found at K39. N6-methylated lysine; alternate is present on K39. N6-acetyllysine; by KAT2A and KAT2B is present on residues K99 and K102. K103 bears the N6-acetyllysine; by KAT2A and KAT2B; alternate mark. Residue K103 forms a Glycyl lysine isopeptide (Lys-Gly) (interchain with G-Cter in SUMO2); alternate linkage. S105 carries the post-translational modification Phosphoserine; by RPS6KA1 and PKC/PRKCA. Residue K134 forms a Glycyl lysine isopeptide (Lys-Gly) (interchain with G-Cter in SUMO2); alternate linkage. K134 participates in a covalent cross-link: Glycyl lysine isopeptide (Lys-Gly) (interchain with G-Cter in SUMO); alternate. Residue K145 forms a Glycyl lysine isopeptide (Lys-Gly) (interchain with G-Cter in SUMO2) linkage. The interval 172–201 is disordered; it reads SGSSGSLSTSSSSSPPGTPSPADAKAAPAA. T180 bears the Phosphothreonine; by GSK3-beta mark. Residues S181 and S182 are each glycosylated (O-linked (GlcNAc) serine). A Phosphoserine; by GSK3-beta modification is found at S185. T189 carries the phosphothreonine; by RPS6KA1, CDK2 and MAPK modification. Residues K212 and K214 each participate in a glycyl lysine isopeptide (Lys-Gly) (interchain with G-Cter in SUMO2) cross-link. One can recognise a bZIP domain in the interval 223–286; the sequence is SDEYKMRRER…STLRNLFKQL (64 aa). Residues 227–247 form a basic motif region; that stretch reads KMRRERNNIAVRKSRDKAKMR. At S240 the chain carries Phosphoserine; by PKC/PRKCA. Residues 249–256 form a leucine-zipper region; that stretch reads LETQHKVL. Residue S277 is modified to Phosphoserine; by CaMK2. K284 participates in a covalent cross-link: Glycyl lysine isopeptide (Lys-Gly) (interchain with G-Cter in SUMO2).

The protein belongs to the bZIP family. C/EBP subfamily. Binds DNA as a homodimer and as a heterodimer. Interacts with MYB; within the complex, MYB and CEBPB bind to different promoter regions. Interacts with ATF4. Binds DNA as a heterodimer with ATF4. Can form stable heterodimers with CEBPA, CEBPD, CEBPE and CEBPG. Interacts with SIX1. Isoform 2 and isoform 3 also form heterodimers. Interacts with TRIM28 and PTGES2. Interacts with PRDM16. Interacts with CCDC85B. Forms a complex with THOC5. Interacts with ZNF638; this interaction increases transcriptional activation. Interacts with CIDEA and CIDEC; these interactions increase transcriptional activation of a subset of CEBPB downstream target genes. Interacts with DDIT3/CHOP. Interacts with EP300; recruits EP300 to chromatin. Interacts with RORA; the interaction disrupts interaction with EP300. Interacts (not methylated) with MED23, MED26, SMARCA2, SMARCB1 and SMARCC1. Interacts with KAT2A and KAT2B. Interacts with ATF5; EP300 is required for ATF5 and CEBPB interaction and DNA binding. Interacts with NFE2L1; the heterodimer represses expression of DSPP during odontoblast differentiation. Post-translationally, phosphorylated at Thr-189 by MAPK and CDK2, serves to prime phosphorylation at Thr-180 and Ser-185 by GSK3B and acquire DNA-binding as well as transactivation activities, required to induce adipogenesis. MAPK and CDK2 act sequentially to maintain Thr-189 in the primed phosphorylated state during mitotical cloning expansion and thereby progression of terminal differentiation. Phosphorylation at Ser-105 enhances transactivation activity. Phosphorylation at Ser-277 in response to calcium increases transactivation activity. Phosphorylated at Thr-189 by RPS6KA1. In terms of processing, methylated. Methylation at Arg-3 by CARM1 and at Lys-39 by EHMT2 inhibit transactivation activity. Methylation is probably inhibited by phosphorylation at Thr-189. Sumoylated by polymeric chains of SUMO2 or SUMO3. Sumoylation at Lys-134 is required for inhibition of T-cells proliferation. In adipocytes, sumoylation at Lys-134 by PIAS1 leads to ubiquitination and subsequent proteasomal degradation. Desumoylated by SENP2, which abolishes ubiquitination and stabilizes protein levels. Post-translationally, ubiquitinated, leading to proteasomal degradation. In terms of processing, O-glycosylated, glycosylation at Ser-181 and Ser-182 prevents phosphorylation on Thr-189, Ser-185 and Thr-180 and DNA binding activity which delays the adipocyte differentiation program. Acetylated. Acetylation at Lys-39 is an important and dynamic regulatory event that contributes to its ability to transactivate target genes, including those associated with adipogenesis and adipocyte function. Deacetylation by HDAC1 represses its transactivation activity. Acetylated by KAT2A and KAT2B within a cluster of lysine residues between amino acids 99-103, this acetylation is strongly induced by glucocorticoid treatment and enhances transactivation activity. Liver and lung.

Its subcellular location is the nucleus. The protein resides in the cytoplasm. Important transcription factor regulating the expression of genes involved in immune and inflammatory responses. Also plays a significant role in adipogenesis, as well as in the gluconeogenic pathway, liver regeneration, and hematopoiesis. The consensus recognition site is 5'-T[TG]NNGNAA[TG]-3'. Its functional capacity is governed by protein interactions and post-translational protein modifications. During early embryogenesis, plays essential and redundant roles with CEBPA. Has a promitotic effect on many cell types such as hepatocytes and adipocytes but has an antiproliferative effect on T-cells by repressing MYC expression, facilitating differentiation along the T-helper 2 lineage. Binds to regulatory regions of several acute-phase and cytokines genes and plays a role in the regulation of acute-phase reaction and inflammation. Also plays a role in intracellular bacteria killing. During adipogenesis, is rapidly expressed and, after activation by phosphorylation, induces CEBPA and PPARG, which turn on the series of adipocyte genes that give rise to the adipocyte phenotype. The delayed transactivation of the CEBPA and PPARG genes by CEBPB appears necessary to allow mitotic clonal expansion and thereby progression of terminal differentiation. Essential for female reproduction because of a critical role in ovarian follicle development. Restricts osteoclastogenesis: together with NFE2L1; represses expression of DSPP during odontoblast differentiation. In terms of biological role, essential for gene expression induction in activated macrophages. Plays a major role in immune responses such as CD4(+) T-cell response, granuloma formation and endotoxin shock. Not essential for intracellular bacteria killing. Functionally, acts as a dominant negative through heterodimerization with isoform 2. Promotes osteoblast differentiation and osteoclastogenesis. This Rattus norvegicus (Rat) protein is CCAAT/enhancer-binding protein beta.